We begin with the raw amino-acid sequence, 394 residues long: Elongation factor Tu 1 (394 aa).

A tr-type G domain is found at lysine 10 to glutamate 204. A G1 region spans residues glycine 19–threonine 26. Position 19 to 26 (glycine 19 to threonine 26) interacts with GTP. Threonine 26 is a Mg(2+) binding site. Positions glycine 60–asparagine 64 are G2. Residues aspartate 81–glycine 84 form a G3 region. GTP-binding positions include aspartate 81–histidine 85 and asparagine 136–aspartate 139. A G4 region spans residues asparagine 136–aspartate 139. Residues serine 174–leucine 176 form a G5 region.

The protein belongs to the TRAFAC class translation factor GTPase superfamily. Classic translation factor GTPase family. EF-Tu/EF-1A subfamily. In terms of assembly, monomer.

It localises to the cytoplasm. It catalyses the reaction GTP + H2O = GDP + phosphate + H(+). Its function is as follows. GTP hydrolase that promotes the GTP-dependent binding of aminoacyl-tRNA to the A-site of ribosomes during protein biosynthesis. This Yersinia pestis bv. Antiqua (strain Nepal516) protein is Elongation factor Tu 1.